A 254-amino-acid chain; its full sequence is Leucyl/phenylalanyl-tRNA--protein transferase (254 aa).

The span at 1–10 shows a compositional bias: pro residues; the sequence is MSSQPPPLPW. The interval 1–28 is disordered; it reads MSSQPPPLPWLDPNQDFPPTSQAWDENS.

The protein belongs to the L/F-transferase family.

The protein localises to the cytoplasm. The catalysed reaction is N-terminal L-lysyl-[protein] + L-leucyl-tRNA(Leu) = N-terminal L-leucyl-L-lysyl-[protein] + tRNA(Leu) + H(+). It catalyses the reaction N-terminal L-arginyl-[protein] + L-leucyl-tRNA(Leu) = N-terminal L-leucyl-L-arginyl-[protein] + tRNA(Leu) + H(+). It carries out the reaction L-phenylalanyl-tRNA(Phe) + an N-terminal L-alpha-aminoacyl-[protein] = an N-terminal L-phenylalanyl-L-alpha-aminoacyl-[protein] + tRNA(Phe). In terms of biological role, functions in the N-end rule pathway of protein degradation where it conjugates Leu, Phe and, less efficiently, Met from aminoacyl-tRNAs to the N-termini of proteins containing an N-terminal arginine or lysine. This Albidiferax ferrireducens (strain ATCC BAA-621 / DSM 15236 / T118) (Rhodoferax ferrireducens) protein is Leucyl/phenylalanyl-tRNA--protein transferase.